A 127-amino-acid chain; its full sequence is CST complex subunit TEN1 (127 aa).

It belongs to the TEN1 family. As to quaternary structure, component of the CST complex, composed of CTC1, TEN1 and STN1. Interacts with STN1. No interaction with POT1A, but competes with it for STN1 binding. As to expression, ubiquitous. High expression in meristematic tissues and in vasculature.

Its subcellular location is the nucleus. The protein resides in the chromosome. It is found in the telomere. Functionally, required for the maintenance of meristems and stem cells through the reduction of DNA damage. Promotes telomere integrity by maintaining telomere length and proper architecture of the chromosome terminus. Negatively regulates telomerase repeat addition processivity. Hampers contacts between enzymatically active telomerase and CST complex. In Arabidopsis thaliana (Mouse-ear cress), this protein is CST complex subunit TEN1.